The primary structure comprises 22 residues: Lantibiotic mutacin B-Ny266 (22 aa).

The segment at residues S3–C7 is a cross-link (lanthionine (Ser-Cys)). Residue S5 is modified to 2,3-didehydroalanine (Ser). The beta-methyllanthionine (Thr-Cys) cross-link spans T8–C11. T14 carries the post-translational modification 2,3-didehydrobutyrine. Positions S16 to C21 form a cross-link, lanthionine (Ser-Cys). Residues S19–C22 constitute a cross-link (S-(2-aminovinyl)-D-cysteine (Ser-Cys)).

Maturation of lantibiotics involves the enzymatic conversion of Thr, and Ser into dehydrated AA and the formation of thioether bonds with cysteine. The C-terminal lanthionine undergoes decarboxylation. This is followed by membrane translocation and cleavage of the modified precursor. In terms of processing, it is not established whether the 2,3-didehydrobutyrine is the E- or Z-isomer.

Lanthionine-containing peptide antibiotic (lantibiotic) active on Gram-positive bacteria. The bactericidal activity of lantibiotics is based on depolarization of energized bacterial cytoplasmic membranes, initiated by the formation of aqueous transmembrane pores. The protein is Lantibiotic mutacin B-Ny266 of Streptococcus mutans.